The chain runs to 494 residues: ATP synthase subunit alpha 1 (494 aa).

The protein belongs to the ATPase alpha/beta chains family. As to quaternary structure, F-type ATPases have 2 components, CF(1) - the catalytic core - and CF(0) - the membrane proton channel. CF(1) has five subunits: alpha(3), beta(3), gamma(1), delta(1), epsilon(1). CF(0) has three main subunits: a(1), b(2) and c(9-12). The alpha and beta chains form an alternating ring which encloses part of the gamma chain. CF(1) is attached to CF(0) by a central stalk formed by the gamma and epsilon chains, while a peripheral stalk is formed by the delta and b chains.

It is found in the cell inner membrane. The enzyme catalyses ATP + H2O + 4 H(+)(in) = ADP + phosphate + 5 H(+)(out). Its function is as follows. Produces ATP from ADP in the presence of a proton gradient across the membrane. The alpha chain is a regulatory subunit. In Hahella chejuensis (strain KCTC 2396), this protein is ATP synthase subunit alpha 1.